Reading from the N-terminus, the 70-residue chain is Large ribosomal subunit protein eL38 (70 aa).

It belongs to the eukaryotic ribosomal protein eL38 family.

In Timarcha balearica, this protein is Large ribosomal subunit protein eL38 (RpL38).